The sequence spans 809 residues: Valine--tRNA ligase (809 aa).

A 'HIGH' region motif is present at residues 60-70; it reads PFTSGELHMGH. The 'KMSKS' region signature appears at 546–550; that stretch reads RMSKS. An ATP-binding site is contributed by Lys549.

The protein belongs to the class-I aminoacyl-tRNA synthetase family. ValS type 2 subfamily.

It localises to the cytoplasm. The enzyme catalyses tRNA(Val) + L-valine + ATP = L-valyl-tRNA(Val) + AMP + diphosphate. Functionally, catalyzes the attachment of valine to tRNA(Val). As ValRS can inadvertently accommodate and process structurally similar amino acids such as threonine, to avoid such errors, it has a 'posttransfer' editing activity that hydrolyzes mischarged Thr-tRNA(Val) in a tRNA-dependent manner. The protein is Valine--tRNA ligase of Sulfurisphaera tokodaii (strain DSM 16993 / JCM 10545 / NBRC 100140 / 7) (Sulfolobus tokodaii).